The chain runs to 255 residues: F-box/SPRY domain-containing protein 1 (255 aa).

The region spanning 3-51 (DRVAALCNYNVLEVVFSYLDLNDLGRCSQVCKSWFHFLNDENSDVWRFH) is the F-box domain. The B30.2/SPRY domain maps to 61 to 253 (TKSELLSPVP…VSMVYCGTPL (193 aa)).

It belongs to the FBXO45/Fsn family. As to quaternary structure, component of an E3 ubiquitin ligase complex composed of hiw and Fsn.

The protein resides in the synapse. It participates in protein modification; protein ubiquitination. In terms of biological role, required in the presynaptic motoneuron to down-regulate the levels of wnd and restrain synaptic terminal growth at the neuromuscular junction (NMJ). The chain is F-box/SPRY domain-containing protein 1 from Drosophila persimilis (Fruit fly).